Consider the following 150-residue polypeptide: Ribosomal RNA large subunit methyltransferase H (150 aa).

Residues Ala100 and 118–123 (LSEMTF) contribute to the S-adenosyl-L-methionine site.

It belongs to the RNA methyltransferase RlmH family. As to quaternary structure, homodimer.

The protein resides in the cytoplasm. The enzyme catalyses pseudouridine(1915) in 23S rRNA + S-adenosyl-L-methionine = N(3)-methylpseudouridine(1915) in 23S rRNA + S-adenosyl-L-homocysteine + H(+). Specifically methylates the pseudouridine at position 1915 (m3Psi1915) in 23S rRNA. The chain is Ribosomal RNA large subunit methyltransferase H from Helicobacter pylori (strain P12).